The following is a 1098-amino-acid chain: uncharacterized protein (1098 aa).

This is an uncharacterized protein from Invertebrate iridescent virus 3 (IIV-3).